The sequence spans 478 residues: Patatin-like phospholipase domain-containing protein 2 (478 aa).

Residues Met-1–Trp-8 are Cytoplasmic-facing. A helical transmembrane segment spans residues Asn-9–Leu-29. The region spanning Ile-10 to Lys-179 is the PNPLA domain. The short motif at Gly-14–Gly-19 is the GXGXXG element. Residues Arg-30–His-42 lie on the Extracellular side of the membrane. The N-linked (GlcNAc...) asparagine glycan is linked to Asn-39. A helical membrane pass occupies residues Ile-43–Gly-63. The GXSXG motif lies at Gly-45–Gly-49. Residue Ser-47 is the Nucleophile of the active site. Residues Glu-64–Glu-137 are Cytoplasmic-facing. A Glycyl lysine isopeptide (Lys-Gly) (interchain with G-Cter in ubiquitin) cross-link involves residue Lys-92. Residues Leu-138–Thr-158 traverse the membrane as a helical segment. At Leu-159 to Arg-323 the chain is on the extracellular side. Residue Asp-166 is the Proton acceptor of the active site. Residues Asp-166 to Gly-168 carry the DGA/G motif. The helical transmembrane segment at Leu-324 to Ile-344 threads the bilayer. The Cytoplasmic portion of the chain corresponds to Arg-345–Cys-478. At Ser-366 the chain carries Phosphoserine; in vitro. Phosphoserine; by PKA is present on Ser-388. Phosphoserine occurs at positions 398 and 422. A disordered region spans residues Arg-456 to Cys-478. A compositionally biased stretch (low complexity) spans Ala-457–Cys-478. The residue at position 460 (Ser-460) is a Phosphoserine; in vitro.

As to quaternary structure, interacts with ABHD5; this association stimulates PNPLA2 triglyceride hydrolase activity. Interacts with SERPINF1; this interaction stimulates the phospholipase A2 activity of PNPLA2. Despite a colocalization in lipid droplets, it probably does not interact with PLIN. Interacts with PLIN5; prevents interaction with ABHD5. Interacts with FAF2. Phosphorylation at Ser-398 by PKA is increased during fasting and moderate intensity exercise, and moderately increases lipolytic activity. Post-translationally, ubiquitinated by PEX2 in response to reactive oxygen species (ROS), leading to its degradation. Ubiquitination is stimulated by LDAH.

It localises to the lipid droplet. The protein resides in the cell membrane. It is found in the cytoplasm. It carries out the reaction a triacylglycerol + H2O = a diacylglycerol + a fatty acid + H(+). The catalysed reaction is a triacylglycerol + H2O = a 1,2-diacylglycerol + a fatty acid + H(+). The enzyme catalyses a triacylglycerol + H2O = a 1,3-diacylglycerol + a fatty acid + H(+). It catalyses the reaction a triacyl-sn-glycerol + H2O = a 1,3-diacyl-sn-glycerol + a fatty acid + H(+). It carries out the reaction a triacyl-sn-glycerol + H2O = a 2,3-diacyl-sn-glycerol + a fatty acid + H(+). The catalysed reaction is a 1-acylglycerol + a 1,3-diacylglycerol = a triacylglycerol + glycerol. The enzyme catalyses a 1-acylglycerol + a 1,2-diacylglycerol = a triacylglycerol + glycerol. It catalyses the reaction 2 a 1-acylglycerol = a 1,2-diacylglycerol + glycerol. It carries out the reaction a triacylglycerol + all-trans-retinol = an all-trans-retinyl ester + a diacylglycerol. The catalysed reaction is 1,2-di-(9Z-octadecenoyl)-glycerol + (9Z)-octadecenoate + H(+) = 1,2,3-tri-(9Z-octadecenoyl)-glycerol + H2O. The enzyme catalyses 1,2,3-tri-(9Z-octadecenoyl)-glycerol + H2O = 1,3-di-(9Z-octadecenoyl)-glycerol + (9Z)-octadecenoate + H(+). It catalyses the reaction 1-(9Z-octadecenoyl)-glycerol + 1,3-di-(9Z-octadecenoyl)-glycerol = 1,2,3-tri-(9Z-octadecenoyl)-glycerol + glycerol. It carries out the reaction 1-(9Z-octadecenoyl)-glycerol + 1,2-di-(9Z-octadecenoyl)-glycerol = 1,2,3-tri-(9Z-octadecenoyl)-glycerol + glycerol. The catalysed reaction is 2 1-(9Z-octadecenoyl)-glycerol = 1,2-di-(9Z-octadecenoyl)-glycerol + glycerol. The enzyme catalyses 1,2,3-tri-(9Z-octadecenoyl)-glycerol + all-trans-retinol = all-trans-retinyl 9Z-octadecenoate + di-(9Z)-octadecenoylglycerol. It catalyses the reaction 1,2,3-tri-(9Z)-hexadecenoylglycerol + H2O = 1,3-di-(9Z)-hexadecenoylglycerol + (9Z)-hexadecenoate + H(+). It carries out the reaction 1,2,3-tri-(9Z,12Z)-octadecadienoylglycerol + H2O = 1,3-di-(9Z,12Z)-octadecadienoylglycerol + (9Z,12Z)-octadecadienoate + H(+). The catalysed reaction is 1,2,3-tri-(9Z,12Z,15Z)-octadecatrienoylglycerol + H2O = 1,3-di-(9Z,12Z,15Z)-octadecatrienoylglycerol + (9Z,12Z,15Z)-octadecatrienoate + H(+). The enzyme catalyses 1,3-di-(9Z)-octadecenoyl-2-hexadecanoylglycerol + H2O = 1,3-di-(9Z-octadecenoyl)-glycerol + hexadecanoate + H(+). It catalyses the reaction 1,2-di-(9Z)-octadecenoyl-3-hexadecanoyl-sn-glycerol + H2O = 1-(9Z)-octadecenoyl-3-hexadecanoyl-sn-glycerol + (9Z)-octadecenoate + H(+). It carries out the reaction 1-hexadecanoyl-2,3-di-(9Z)-octadecenoyl-sn-glycerol + H2O = 1-hexadecanoyl-3-(9Z)-octadecenoyl-sn-glycerol + (9Z)-octadecenoate + H(+). The catalysed reaction is 1,2,3-tri-(9Z-octadecenoyl)-glycerol + H2O = 2,3-di-(9Z)-octadecenoyl-sn-glycerol + (9Z)-octadecenoate + H(+). The enzyme catalyses 1,2,3-tri-(9Z)-hexadecenoylglycerol + H2O = 2,3-di-(9Z)-hexadecenoyl-sn-glycerol + (9Z)-hexadecenoate + H(+). It catalyses the reaction 1,2,3-tri-(9Z,12Z)-octadecadienoylglycerol + H2O = 2,3-di-(9Z,12Z)-octadecadienoyl-sn-glycerol + (9Z,12Z)-octadecadienoate + H(+). It carries out the reaction 1,2,3-tri-(9Z,12Z,15Z)-octadecatrienoylglycerol + H2O = 2,3-di-(9Z,12Z,15Z)-octadecatrienoyl-sn-glycerol + (9Z,12Z,15Z)-octadecatrienoate + H(+). The catalysed reaction is 1,3-di-(9Z)-octadecenoyl-2-hexadecanoylglycerol + H2O = 2-hexadecanoyl-3-(9Z)-octadecenoyl-sn-glycerol + (9Z)-octadecenoate + H(+). The enzyme catalyses 1-hexadecanoyl-2,3-di-(9Z)-octadecenoyl-sn-glycerol + H2O = 2,3-di-(9Z)-octadecenoyl-sn-glycerol + hexadecanoate + H(+). It catalyses the reaction 1,2-di-(9Z)-octadecenoyl-3-hexadecanoyl-sn-glycerol + H2O = 2-(9Z-octadecenoyl)-3-hexadecanoyl-sn-glycerol + (9Z)-octadecenoate + H(+). It carries out the reaction a 1,2-diacyl-sn-glycero-3-phosphocholine + H2O = a 1-acyl-sn-glycero-3-phosphocholine + a fatty acid + H(+). The catalysed reaction is 1,2,3-tri-(9Z-octadecenoyl)-glycerol + 9-hydroxy-octadecanoate = 9-(9Z-octadecenoyloxy)-octadecanoate + 2,3-di-(9Z)-octadecenoyl-sn-glycerol. The enzyme catalyses 1-hexadecanoyl-2,3-di-(9Z)-octadecenoyl-sn-glycerol + 9-hydroxy-octadecanoate = 9-hexadecanoyloxy-octadecanoate + 2,3-di-(9Z)-octadecenoyl-sn-glycerol. It catalyses the reaction 1,2,3-tri-(10Z)-heptadecenoylglycerol + 9-hydroxy-octadecanoate = 2,3-di-(10Z-heptadecenoyl)-sn-glycerol + 9-(10Z-heptadecenoyloxy)-octadecanoate. It carries out the reaction 1,2,3-tri-(9Z,12Z)-octadecadienoylglycerol + 9-hydroxy-octadecanoate = 2,3-di-(9Z,12Z)-octadecadienoyl-sn-glycerol + 9-(9Z,12Z-octadecadienoyloxy)-octadecanoate. The catalysed reaction is 1,2,3-tri-(9Z)-hexadecenoylglycerol + 9-hydroxy-octadecanoate = 2,3-di-(9Z)-hexadecenoyl-sn-glycerol + 9-(9Z-hexadecenoyloxy)-octadecanoate. The enzyme catalyses 9-hydroxy-octadecanoate + 1,2-di-(9Z-octadecenoyl)-sn-glycerol = 9-(9Z-octadecenoyloxy)-octadecanoate + 2-(9Z-octadecenoyl)-glycerol. It catalyses the reaction 1-hexadecanoyl-2,3-di-(9Z)-octadecenoyl-sn-glycerol + 9-hydroxy-octadecanoate = 1-hexadecanoyl-3-(9Z)-octadecenoyl-sn-glycerol + 9-(9Z-octadecenoyloxy)-octadecanoate. It participates in glycerolipid metabolism; triacylglycerol degradation. Catalyzes the initial step in triglyceride hydrolysis in adipocyte and non-adipocyte lipid droplets. Exhibits a strong preference for the hydrolysis of long-chain fatty acid esters at the sn-2 position of the glycerol backbone and acts coordinately with LIPE/HLS and DGAT2 within the lipolytic cascade. Also possesses acylglycerol transacylase and phospholipase A2 activities. Transfers fatty acid from triglyceride to retinol, hydrolyzes retinylesters, and generates 1,3-diacylglycerol from triglycerides. Regulates adiposome size and may be involved in the degradation of adiposomes. Catalyzes the formation of an ester bond between hydroxy fatty acids and fatty acids derived from triglycerides or diglycerides to generate fatty acid esters of hydroxy fatty acids (FAHFAs) in adipocytes. Acts antagonistically with LDAH in regulation of cellular lipid stores. Inhibits LDAH-stimulated lipid droplet fusion. May play an important role in energy homeostasis. May play a role in the response of the organism to starvation, enhancing hydrolysis of triglycerides and providing free fatty acids to other tissues to be oxidized in situations of energy depletion. This chain is Patatin-like phospholipase domain-containing protein 2, found in Rattus norvegicus (Rat).